The following is a 491-amino-acid chain: Equilibrative nucleobase transporter 1 (491 aa).

A helical transmembrane segment spans residues 17–37 (LLECLGFAGVLFGWPSLVFVF). A glycan (N-linked (GlcNAc...) asparagine) is linked at Asn56. The next 5 helical transmembrane spans lie at 72 to 92 (LIFT…GYIF), 102 to 122 (LIAI…SAGS), 123 to 143 (AVLL…FLIT), 156 to 176 (STII…FLII), and 188 to 208 (ASFI…FLLM). N-linked (GlcNAc...) asparagine glycans are attached at residues Asn220 and Asn229. Ser253 is modified (phosphoserine). The residue at position 258 (Thr258) is a Phosphothreonine. 6 helical membrane-spanning segments follow: residues 279–299 (FAWH…FIGT), 319–339 (TNAF…GLLM), 356–376 (STLA…SLLC), 396–418 (ILQV…LAFP), 427–447 (GLVM…FTLI), and 456–476 (FYVN…PFLV).

Belongs to the SLC43A transporter (TC 2.A.1.44) family. Widely expressed with highest levels in the liver and lung, followed by the pancreas. Highly expressed in macrophages.

The protein localises to the basolateral cell membrane. The enzyme catalyses adenine(out) = adenine(in). The catalysed reaction is guanine(out) = guanine(in). It catalyses the reaction hypoxanthine(out) = hypoxanthine(in). Its activity is regulated as follows. Adenine transport is strongly inhibited by decynium-22. 6-mercaptopurine-transport is inhibited by 6-thioguanine, 6-methylmercaptopurine and decynium-22. Its function is as follows. Sodium-independent purine-selective nucleobase transporter which mediates the equilibrative transport of extracellular purine nucleobases such as adenine, guanine and hypoxanthine. May regulate fatty acid (FA) transport in adipocytes, acting as a positive regulator of FA efflux and as a negative regulator of FA uptake. Sodium-independent purine-selective nucleobase transporter which mediates the equilibrative transport of extracellular purine nucleobase adenine. Mediates the influx and efflux of the purine nucleobase analog drug 6-mercaptopurine across the membrane. This chain is Equilibrative nucleobase transporter 1 (SLC43A3), found in Homo sapiens (Human).